The chain runs to 122 residues: Large ribosomal subunit protein uL14 (122 aa).

The protein belongs to the universal ribosomal protein uL14 family. As to quaternary structure, part of the 50S ribosomal subunit. Forms a cluster with proteins L3 and L19. In the 70S ribosome, L14 and L19 interact and together make contacts with the 16S rRNA in bridges B5 and B8.

In terms of biological role, binds to 23S rRNA. Forms part of two intersubunit bridges in the 70S ribosome. The sequence is that of Large ribosomal subunit protein uL14 from Streptococcus equi subsp. equi (strain 4047).